A 496-amino-acid polypeptide reads, in one-letter code: Probable cytosol aminopeptidase (496 aa).

Mn(2+) is bound by residues Lys266 and Asp271. Lys278 is an active-site residue. Positions 289, 348, and 350 each coordinate Mn(2+). Arg352 is a catalytic residue.

The protein belongs to the peptidase M17 family. Requires Mn(2+) as cofactor.

It is found in the cytoplasm. It catalyses the reaction Release of an N-terminal amino acid, Xaa-|-Yaa-, in which Xaa is preferably Leu, but may be other amino acids including Pro although not Arg or Lys, and Yaa may be Pro. Amino acid amides and methyl esters are also readily hydrolyzed, but rates on arylamides are exceedingly low.. It carries out the reaction Release of an N-terminal amino acid, preferentially leucine, but not glutamic or aspartic acids.. Functionally, presumably involved in the processing and regular turnover of intracellular proteins. Catalyzes the removal of unsubstituted N-terminal amino acids from various peptides. This is Probable cytosol aminopeptidase from Pseudomonas syringae pv. syringae (strain B728a).